A 64-amino-acid polypeptide reads, in one-letter code: Phylloxin-S1 (64 aa).

Positions 1 to 22 (MVFLKKSLLLVLFVGLVSLSIC) are cleaved as a signal peptide. Residues 23 to 44 (EENKREEHEEVEENAEKAEEKR) constitute a propeptide that is removed on maturation. Glutamine 63 carries the post-translational modification Glutamine amide.

In terms of tissue distribution, expressed by the skin glands.

It is found in the secreted. Its function is as follows. Antimicrobial peptide against both Gram-positive and Gram-negative bacteria. This Phyllomedusa sauvagei (Sauvage's leaf frog) protein is Phylloxin-S1.